The following is a 588-amino-acid chain: Dual specificity tyrosine-phosphorylation-regulated kinase 3 (588 aa).

The tract at residues 1–188 is disordered; the sequence is MGGTARGPGR…HGVIGGPNNG (188 aa). Polar residues predominate over residues 97 to 134; sequence SNTIQSDGISDSEKCSPTVSQGKSSDCLNTVKSNSSSK. The region spanning 209–522 is the Protein kinase domain; the sequence is YEVLKIIGKG…PAQALRHPWI (314 aa). ATP contacts are provided by residues 215 to 223, K238, and 288 to 291; these read IGKGSFGQV and FELL. The active-site Proton acceptor is D335. The residue at position 350 (S350) is a Phosphoserine. Y369 carries the phosphotyrosine modification. The short motif at 468-481 is the Nuclear localization signal element; it reads RSRRGKKRGPPGSK.

This sequence belongs to the protein kinase superfamily. CMGC Ser/Thr protein kinase family. MNB/DYRK subfamily. Interacts with SIRT1. Mg(2+) serves as cofactor. In terms of processing, ubiquitinated at anaphase by the anaphase-promoting complex (APC/C), leading to its degradation by the proteasome. Post-translationally, protein kinase activity is activated following autophosphorylation at Tyr-369. Autophosphorylation at Ser-350 stabilizes the protein and enhances the protein kinase activity. Isoform 1: Highly expressed in testis and in hematopoietic tissue such as fetal liver, and bone marrow. Isoform 1: Predominant form in fetal liver and bone marrow. Isoform 1: Present at low levels in heart, pancreas, lymph node and thymus. Isoform 2: Highly expressed in testis and in hematopoietic tissue such as fetal liver, and bone marrow. Isoform 2: Predominant form in testis. Isoform 2: Present at low levels in heart, pancreas, lymph node and thymus.

It localises to the nucleus. Its subcellular location is the cytoplasm. The protein resides in the nucleus speckle. The protein localises to the cytoplasmic granule. It is found in the cytoskeleton. It localises to the microtubule organizing center. Its subcellular location is the centrosome. It catalyses the reaction L-seryl-[protein] + ATP = O-phospho-L-seryl-[protein] + ADP + H(+). The catalysed reaction is L-threonyl-[protein] + ATP = O-phospho-L-threonyl-[protein] + ADP + H(+). It carries out the reaction L-tyrosyl-[protein] + ATP = O-phospho-L-tyrosyl-[protein] + ADP + H(+). Protein kinase activity is activated following autophosphorylation at Tyr-369. Inhibited by harmine, an ATP competitive inhibitor. Inhibited by small-compound GSK-626616. Functionally, dual-specificity protein kinase that promotes disassembly of several types of membraneless organelles during mitosis, such as stress granules, nuclear speckles and pericentriolar material. Dual-specificity tyrosine-regulated kinases (DYRKs) autophosphorylate a critical tyrosine residue in their activation loop and phosphorylate their substrate on serine and threonine residues. Acts as a central dissolvase of membraneless organelles during the G2-to-M transition, after the nuclear-envelope breakdown: acts by mediating phosphorylation of multiple serine and threonine residues in unstructured domains of proteins, such as SRRM1 and PCM1. Does not mediate disassembly of all membraneless organelles: disassembly of P-body and nucleolus is not regulated by DYRK3. Dissolution of membraneless organelles at the onset of mitosis is also required to release mitotic regulators, such as ZNF207, from liquid-unmixed organelles where they are sequestered and keep them dissolved during mitosis. Regulates mTORC1 by mediating the dissolution of stress granules: during stressful conditions, DYRK3 partitions from the cytosol to the stress granule, together with mTORC1 components, which prevents mTORC1 signaling. When stress signals are gone, the kinase activity of DYRK3 is required for the dissolution of stress granule and mTORC1 relocation to the cytosol: acts by mediating the phosphorylation of the mTORC1 inhibitor AKT1S1, allowing full reactivation of mTORC1 signaling. Also acts as a negative regulator of EPO-dependent erythropoiesis: may place an upper limit on red cell production during stress erythropoiesis. Inhibits cell death due to cytokine withdrawal in hematopoietic progenitor cells. Promotes cell survival upon genotoxic stress through phosphorylation of SIRT1: this in turn inhibits p53/TP53 activity and apoptosis. The sequence is that of Dual specificity tyrosine-phosphorylation-regulated kinase 3 from Homo sapiens (Human).